Consider the following 530-residue polypeptide: tRNA-2-methylthio-N(6)-dimethylallyladenosine synthase (530 aa).

The MTTase N-terminal domain maps to 19–134 (RTYEVRTYGC…LPTLLERARH (116 aa)). Residues Cys-28, Cys-63, Cys-97, Cys-171, Cys-175, and Cys-178 each contribute to the [4Fe-4S] cluster site. Positions 157 to 387 (RDEIASGWVS…TALQERISHE (231 aa)) constitute a Radical SAM core domain. The TRAM domain maps to 390–460 (QRVVGRTVEV…PFHLIADSVD (71 aa)). The segment at 509–530 (VPTTASTSAPVGDGSAHPRHRA) is disordered.

Belongs to the methylthiotransferase family. MiaB subfamily. As to quaternary structure, monomer. Requires [4Fe-4S] cluster as cofactor.

It localises to the cytoplasm. The catalysed reaction is N(6)-dimethylallyladenosine(37) in tRNA + (sulfur carrier)-SH + AH2 + 2 S-adenosyl-L-methionine = 2-methylsulfanyl-N(6)-dimethylallyladenosine(37) in tRNA + (sulfur carrier)-H + 5'-deoxyadenosine + L-methionine + A + S-adenosyl-L-homocysteine + 2 H(+). Its function is as follows. Catalyzes the methylthiolation of N6-(dimethylallyl)adenosine (i(6)A), leading to the formation of 2-methylthio-N6-(dimethylallyl)adenosine (ms(2)i(6)A) at position 37 in tRNAs that read codons beginning with uridine. In Clavibacter sepedonicus (Clavibacter michiganensis subsp. sepedonicus), this protein is tRNA-2-methylthio-N(6)-dimethylallyladenosine synthase.